Consider the following 297-residue polypeptide: Hydroxysqualene synthase (297 aa).

Belongs to the phytoene/squalene synthase family. HpnC subfamily.

It carries out the reaction presqualene diphosphate + H2O = hydroxysqualene + diphosphate. It participates in secondary metabolite biosynthesis; hopanoid biosynthesis. In terms of biological role, involved in the biosynthesis of the hopanoid precursor squalene (SQ) from farnesyl diphosphate (FPP). Catalyzes the second step, the conversion of presqualene diphosphate (PSPP) to hydroxysqualene (HSQ). This chain is Hydroxysqualene synthase, found in Zymomonas mobilis subsp. mobilis (strain ATCC 31821 / ZM4 / CP4).